The chain runs to 405 residues: MVSIITFTKNVLVTLAFALLAQGLAIPEDIDKRAEKVVSLDFTVTRKPFNATAHGQHHQSQQQQQQQQQQPAQKRGTVQTSLINEGPSYAATITVGSNKQQQTVIVDTGSSDLWVVDSAAVCQVTYPGQSPTFCKQDGTYKPSSSTTSQNLGKAFSIRYEDGSSSQGTVYKDTVGLGGASITNQQFADVTTTSVDQGILGIGFTGDESSPTYDNVPVTLKKQGIINKNAYSLYLNSASASSGTIIFGGVDNAKYTGSLTALPITSSNELRVQLSTINIAGTTVSASTTPVLDSGTTLTYFSQTIADKLAAAVGAKWNSYYQLYTSSCNLAGNIVFNFAKGVTISVPLSEFVLQDGNSCYFGVSRDSATILGDNFLRRAYAVYDLDGNTISLAQVKYTTSSSISTL.

A signal peptide spans 1–23 (MVSIITFTKNVLVTLAFALLAQG). Residues 24–75 (LAIPEDIDKRAEKVVSLDFTVTRKPFNATAHGQHHQSQQQQQQQQQQPAQKR) constitute a propeptide, activation peptide. The tract at residues 52-78 (TAHGQHHQSQQQQQQQQQQPAQKRGTV) is disordered. A compositionally biased stretch (low complexity) spans 58–70 (HQSQQQQQQQQQQ). A Peptidase A1 domain is found at 89-392 (YAATITVGSN…DLDGNTISLA (304 aa)). Asp-107 is a catalytic residue. Position 107-109 (107-109 (DTG)) interacts with pepstatin A. A disulfide bridge links Cys-122 with Cys-134. Pepstatin A contacts are provided by residues 160-161 (ED) and 292-296 (DSGTT). Asp-292 is a catalytic residue. The cysteines at positions 327 and 358 are disulfide-linked.

This sequence belongs to the peptidase A1 family. In terms of assembly, monomer.

The protein resides in the secreted. It catalyses the reaction Preferential cleavage at the carboxyl of hydrophobic amino acids, but fails to cleave 15-Leu-|-Tyr-16, 16-Tyr-|-Leu-17 and 24-Phe-|-Phe-25 of insulin B chain. Activates trypsinogen, and degrades keratin.. Secreted aspartic peptidases (SAPs) are a group of ten acidic hydrolases considered as key virulence factors. These enzymes supply the fungus with nutrient amino acids as well as are able to degrade the selected host's proteins involved in the immune defense. Moreover, acts toward human hemoglobin though limited proteolysis to generate a variety of antimicrobial hemocidins, enabling to compete with the other microorganisms of the same physiological niche using the microbicidal peptides generated from the host protein. Functionally, plays a key role in defense against host by cleaving histatin-5 (Hst 5), a peptide from human saliva that carries out fungicidal activity. The cleavage rate decreases in an order of SAP2 &gt; SAP9 &gt; SAP3 &gt; SAP7 &gt; SAP4 &gt; SAP1 &gt; SAP8. The hydrolysis of Hst 5 by SAP8 causes production of the DSHAKRHHGY, HHSHRGY and FHEKHHSHRGY peptides. The sequence is that of Secreted aspartic protease 8 from Candida albicans (strain SC5314 / ATCC MYA-2876) (Yeast).